The sequence spans 379 residues: Probable 3-phenylpropionic acid transporter (379 aa).

Over 1 to 4 (MVLQ) the chain is Cytoplasmic. The chain crosses the membrane as a helical span at residues 5 to 31 (STRWLALGYFTYFFSYGIFLPFWSVWL). Topologically, residues 32-37 (KGIGLT) are periplasmic. A helical membrane pass occupies residues 38–66 (PETIGLLLGAGLVARFLGSLLIAPRVSDP). At 67–70 (SRLI) the chain is on the cytoplasmic side. Residues 71–96 (SALRVLALLTLLFAVAFWAGAHVAWL) traverse the membrane as a helical segment. Residues 97-100 (MLVM) lie on the Periplasmic side of the membrane. Residues 101–118 (IGFNLFFSPLVPLTDALA) traverse the membrane as a helical segment. Over 119–129 (NTWQKQFPLDY) the chain is Cytoplasmic. A helical transmembrane segment spans residues 130–152 (GKVRLWGSVAFVIGSALTGKLVT). The Periplasmic segment spans residues 153–155 (MFD). The helical transmembrane segment at 156–175 (YRVILALLTLGVASMLLGFL) threads the bilayer. Residues 176–207 (IRPTIQPQGASRQQESTGWSAWLALVRQNWRF) lie on the Cytoplasmic side of the membrane. Residues 208–227 (LACVCLLQGAHAAYYGFSAI) form a helical membrane-spanning segment. Residues 228 to 231 (YWQA) lie on the Periplasmic side of the membrane. Residues 232 to 256 (AGYSASAVGYLWSLGVVAEVIIFAL) form a helical membrane-spanning segment. Topologically, residues 257 to 266 (SNKLFRRCSA) are cytoplasmic. The helical transmembrane segment at 267 to 286 (RDMLLISAICGVVRWGIMGA) threads the bilayer. Topologically, residues 287–289 (TTA) are periplasmic. A helical transmembrane segment spans residues 290 to 312 (LPWLIVVQILHCGTFTVCHLAAM). Over 313 to 323 (RYIAARQGSEV) the chain is Cytoplasmic. Residues 324–351 (IRLQAVYSAVAMGGSIAIMTVFAGFLYQ) form a helical membrane-spanning segment. Over 352–354 (YLG) the chain is Periplasmic. A helical transmembrane segment spans residues 355–375 (HGVFWVMALVALPAMFLRPKV). Over 376–379 (VPSC) the chain is Cytoplasmic.

The protein belongs to the major facilitator superfamily. Phenyl propionate permease (PPP) (TC 2.A.1.27) family.

The protein localises to the cell inner membrane. Functionally, probable permease involved in the uptake of 3-phenylpropionic acid. The polypeptide is Probable 3-phenylpropionic acid transporter (hcaT) (Escherichia coli (strain K12)).